The sequence spans 326 residues: Flap endonuclease 1 (326 aa).

Positions 1–98 (MGVQFNDSIP…KTREERRKVK (98 aa)) are N-domain. Residues Asp27, Asp80, Glu152, Glu154, Asp173, Asp175, and Asp224 each contribute to the Mg(2+) site. The I-domain stretch occupies residues 116 to 245 (DMQKYAKRIN…KKALTIIKNK (130 aa)). The tract at residues 318 to 326 (SQTSLDSWF) is interaction with PCNA.

The protein belongs to the XPG/RAD2 endonuclease family. FEN1 subfamily. As to quaternary structure, interacts with PCNA. PCNA stimulates the nuclease activity without altering cleavage specificity. The cofactor is Mg(2+).

Structure-specific nuclease with 5'-flap endonuclease and 5'-3' exonuclease activities involved in DNA replication and repair. During DNA replication, cleaves the 5'-overhanging flap structure that is generated by displacement synthesis when DNA polymerase encounters the 5'-end of a downstream Okazaki fragment. Binds the unpaired 3'-DNA end and kinks the DNA to facilitate 5' cleavage specificity. Cleaves one nucleotide into the double-stranded DNA from the junction in flap DNA, leaving a nick for ligation. Also involved in the base excision repair (BER) pathway. Acts as a genome stabilization factor that prevents flaps from equilibrating into structures that lead to duplications and deletions. Also possesses 5'-3' exonuclease activity on nicked or gapped double-stranded DNA. The sequence is that of Flap endonuclease 1 from Methanococcus aeolicus (strain ATCC BAA-1280 / DSM 17508 / OCM 812 / Nankai-3).